A 311-amino-acid polypeptide reads, in one-letter code: Meiotically up-regulated gene 146 protein (311 aa).

The protein resides in the cytoplasm. It localises to the nucleus. Functionally, has a role in sporulation. This chain is Meiotically up-regulated gene 146 protein (mug146), found in Schizosaccharomyces pombe (strain 972 / ATCC 24843) (Fission yeast).